A 765-amino-acid chain; its full sequence is Putative chloride channel-like protein CLC-g (765 aa).

The next 12 helical transmembrane spans lie at 67-87, 116-136, 167-187, 190-210, 232-252, 262-282, 315-335, 355-375, 438-458, 462-482, 494-514, and 515-535; these read VFMK…IGFA, FVVF…ITAF, LIIK…IGKA, MVHT…KRYR, GAAA…LFAL, ALLW…RALI, VLPV…YNFL, ILLA…LPFL, FSVL…YGIV, GLFV…GMLL, AVLG…STCV, and ILLE…VLLI. Residues 568–640 enclose the CBS 1 domain; the sequence is MRQLLVGDVV…LLKKRVFMPS (73 aa). The residue at position 646 (Ser646) is a Phosphoserine. Residues 687-748 form the CBS 2 domain; that stretch reads FSNASPYTVV…PEHILGLHPS (62 aa). The helical transmembrane segment at 715–735 threads the bilayer; sequence HLLVIPKTSNRPPVVGILTRH.

It belongs to the chloride channel (TC 2.A.49) family. In terms of assembly, homodimer. Interacts with PP2A5.

Its subcellular location is the membrane. Putative voltage-gated chloride channel. This Arabidopsis thaliana (Mouse-ear cress) protein is Putative chloride channel-like protein CLC-g (CLC-G).